Here is a 493-residue protein sequence, read N- to C-terminus: Probable plastidic glucose transporter 2 (493 aa).

The segment covering 1–14 has biased composition (polar residues); the sequence is MLGLQRETSSMYKR. Positions 1–24 are disordered; that stretch reads MLGLQRETSSMYKRTSSRDYSPMI. The next 12 helical transmembrane spans lie at 52–72, 94–114, 128–148, 151–171, 182–202, 211–231, 293–313, 329–349, 356–376, 392–412, 424–444, and 450–470; these read LPHVLVATISSFLFGYHLGVV, LVVSVCLGGAFLGSLFSGGVA, LPMILGAFVSGVSNSLAVMLL, FLVGTGMGLGPPVAALYVTEV, SFIQIATCLGLMAALFIGIPV, VCFWLSTIPAALLALGMFLCA, VVFIGSTLFALQQLSGINAVF, LGNIFVGVSNLLGSVIAMVLM, LLLLWSFIGMAAAMALQVGAT, GTLVFVLTFALGAGPVPGLLL, AMAFCMSVHWVINFFVGLLFL, and LGPRLLYSMFSTFCLMAVMFV.

The protein belongs to the major facilitator superfamily. Sugar transporter (TC 2.A.1.1) family.

The protein resides in the plastid. It is found in the chloroplast membrane. May be involved in the efflux of glucose towards the cytosol. The polypeptide is Probable plastidic glucose transporter 2 (Arabidopsis thaliana (Mouse-ear cress)).